Reading from the N-terminus, the 386-residue chain is WD repeat-containing protein 89 (386 aa).

WD repeat units follow at residues 21-65 (KEPT…LLRE), 68-107 (GSPG…EKPA), 112-156 (GYPS…QDLS), 167-207 (THSD…EEDA), 213-253 (NSVS…TDEP), and 318-357 (GHAA…KTFT).

In Rattus norvegicus (Rat), this protein is WD repeat-containing protein 89 (Wdr89).